We begin with the raw amino-acid sequence, 1918 residues long: NFX1-type zinc finger-containing protein 1 (1918 aa).

Positions 1 to 12 (MEERRPHLDARP) are enriched in basic and acidic residues. 2 disordered regions span residues 1 to 58 (MEER…RANN) and 75 to 140 (RNPH…QPQQ). The span at 30-42 (RARNQANNPPANA) shows a compositional bias: low complexity. Positions 82 to 105 (RNQEGHASDEARDQRHDQENDTRW) are enriched in basic and acidic residues. A compositionally biased stretch (polar residues) spans 120-129 (SNDNFQQWRT). The stretch at 286-313 (DIEEETEKNLEKVQTIIEHLQEKRREGT) forms a coiled coil. Disordered regions lie at residues 796–819 (SVSP…GEEE) and 876–896 (TAAG…QKKK). Acidic residues predominate over residues 809–819 (EGDEEEEGEEE). The span at 877–887 (AAGQEQATGEW) shows a compositional bias: polar residues. A coiled-coil region spans residues 886 to 967 (EWQTQRNQKK…TSAERMAELR (82 aa)). 6 NF-X1-type zinc fingers span residues 1298-1320 (CGHV…QCMK), 1330-1346 (GHRC…PCQV), 1382-1400 (CGHR…LCSE), 1441-1463 (CGHP…RCQQ), 1471-1488 (CSHK…PCQR), and 1546-1564 (CGHP…KCRI). The stretch at 1741–1820 (LAKKRLSFTS…EKMEALKATL (80 aa)) forms a coiled coil. The RZ-type zinc finger occupies 1827 to 1898 (ISEEERVQIV…LASEMDGAQH (72 aa)). Zn(2+)-binding residues include cysteine 1849, histidine 1853, cysteine 1869, and cysteine 1872.

This sequence belongs to the ZNFX1 family. As to quaternary structure, interacts with MAVS. As to expression, widely expressed.

The protein localises to the mitochondrion outer membrane. It localises to the cytoplasm. The protein resides in the stress granule. Its function is as follows. RNA-binding protein that initiates the antiviral response and is required to restrict the replication of RNA viruses. Acts as a double-stranded RNA (dsRNA) sensor that recognizes viral RNA and then interacts with MAVS to initiate the type I interferon response. Also required for immunity against some bacteria, such as mycobacteria. This is NFX1-type zinc finger-containing protein 1 from Homo sapiens (Human).